We begin with the raw amino-acid sequence, 553 residues long: Undecaprenyl phosphate-alpha-4-amino-4-deoxy-L-arabinose arabinosyl transferase 2 (553 aa).

A run of 12 helical transmembrane segments spans residues 6 to 26 (ASKIGAILLALFFVLTYLFPL), 85 to 105 (FAVRFGSVISILLSALLIYLL), 115 to 135 (VAFVASLIYLSMFLVFSVGTY), 137 to 157 (VLDPMLALWVTASMVCCFWAL), 178 to 198 (MAFMTKGFLALAIPVIVMIPV), 208 to 228 (MLLYGVLAVLSAALISLPWVL), 261 to 281 (FWYYIPIILLGVIPWLGLLPG), 295 to 315 (ELFFLLCWFVVPFLFFSIAKG), 317 to 337 (LPTYMLPFMGPLAMLMAKYGV), 352 to 372 (GYINIFIGVAAVVAILIIQLV), 386 to 406 (WVLAIVAFSLWGIIGYLCSTL), and 410 to 430 (HWLWAASCSLGVSLCIGQAIP).

The protein belongs to the glycosyltransferase 83 family.

Its subcellular location is the cell inner membrane. It carries out the reaction 4-amino-4-deoxy-alpha-L-arabinopyranosyl di-trans,octa-cis-undecaprenyl phosphate + lipid IVA = lipid IIA + di-trans,octa-cis-undecaprenyl phosphate.. The protein operates within lipopolysaccharide metabolism; 4-amino-4-deoxy-beta-L-arabinose-lipid A biosynthesis. Functionally, catalyzes the transfer of the L-Ara4N moiety of the glycolipid undecaprenyl phosphate-alpha-L-Ara4N to lipid A. The modified arabinose is attached to lipid A and is required for resistance to polymyxin and cationic antimicrobial peptides. This Proteus mirabilis (strain HI4320) protein is Undecaprenyl phosphate-alpha-4-amino-4-deoxy-L-arabinose arabinosyl transferase 2.